Consider the following 532-residue polypeptide: MEEQVFKGDPDTPHSISFSGSGFLSFYQAGAVDALRDLAPRMLETAHRFAGTSAGAVIAALAICGIEMDEYLRVLNVGVAEVKKSFLGPLSPSCKMVQMMRQFLYRVLPEDSYKVTTGKLHVSLTRLTDGENVVVSEFTSKEELIEALYCSCFVPVYCGLIPPTYRGVRYIDGGFTGMQPCAFWTDAITISTFSGQQDICPRDCPAIFHDFRMFNCSFQFSLENIARMTHALFPPDLVILHDYYYRGYEDAVLYLRRLNAVYLNSSSKRVIFPRVEVYCQIELALGNECPERSQPSLRARQASLEGATQPHKEWVPKGDGRGSHGPPVSQPVQTLEFTCESPVSAPVSPLEQPPAQPLASSTPLSLSGMPPVSFPAVHKPPSSTPGSSLPTPPPGLSPLSPQQQVQPSGSPARSLHSQAPTSPRPSLGPSTVGAPQTLPRSSLSAFPAQPPVEELGQEQPQAVALLVSSKPKSAVPLVHVKETVSKPYVTESPAEDSNWVNKVFKKNKQKTSGTRKGFPRHSGSKKPSSKVQ.

Residues I16–T185 form the PNPLA domain. The GXSXG signature appears at G51–G55. The Nucleophile role is filled by S53. D172 functions as the Proton acceptor in the catalytic mechanism. A DGA/G motif is present at residues D172–G174. Disordered stretches follow at residues P290–Q457 and V489–Q532. Residues P310–G322 are compositionally biased toward basic and acidic residues. 2 stretches are compositionally biased toward low complexity: residues P380 to L389 and S397 to P411. The segment covering G517–Q532 has biased composition (basic residues).

In terms of tissue distribution, expressed in the digestive system. Expressed in the epidermis of skin keratinocytes. Strongly expressed in the granular layer. Expressed in the upper epidermis and eccrine sweat glands of the dermis and in the region of keratin filament bundles, which is more pronounced in upper epidermal layers and in the lower cornified layers.

Its subcellular location is the cytoplasm. It catalyses the reaction an N-(omega-hydroxy-ultra-long chain fatty acyl)-sphingoid base + a (9Z,12Z)-octadecadienoyl-containing triacyl-sn-glycerol = an N-[omega-(9Z,12Z-octadecadienoyloxy)-O-ultra-long chain fatty acyl]-sphingoid base + a diacylglycerol. It carries out the reaction an N-(omega-hydroxy-ultra-long chain fatty acyl)-sphing-4-enine + a (9Z,12Z)-octadecadienoyl-containing triacyl-sn-glycerol = an N-(omega-(9Z,12Z-octadecadienoyloxy)-ultra-long chain fatty acyl)-sphing-4-enine + a diacylglycerol. The enzyme catalyses N-(30-hydroxytriacontanoyl)-sphing-4-enine + 1,2,3-tri-(9Z,12Z)-octadecadienoylglycerol = N-[30-(9Z,12Z-octadecadienoyloxy)-triacontanoyl]-sphing-4-enine + di-(9Z,12Z)-octadecadienoylglycerol. The catalysed reaction is N-(28-hydroxyoctacosanoyl)-sphing-4-enine + a (9Z,12Z)-octadecadienoyl-containing triacyl-sn-glycerol = N-(28-(9Z,12Z-octadecadienoyloxy)-octacosanoyl)-sphing-4-enine + a diacylglycerol. It catalyses the reaction N-(32-hydroxydotriacontanoyl)-sphing-4-enine + a (9Z,12Z)-octadecadienoyl-containing triacyl-sn-glycerol = N-(32-(9Z,12Z-octadecadienoyloxy)-dotricontanoyl)-sphing-4-enine + a diacylglycerol. It carries out the reaction N-(32-hydroxydotriacontenoyl)-sphing-4-enine + a (9Z,12Z)-octadecadienoyl-containing triacyl-sn-glycerol = an N-(32-(9Z,12Z-octadecadienoyloxy)-dotriacontenoyl)-sphing-4-enine + a diacylglycerol. The enzyme catalyses an N-(34-hydroxytetratriacontenoyl)-sphing-4-enine + a (9Z,12Z)-octadecadienoyl-containing triacyl-sn-glycerol = an N-(34-(9Z,12Z-octadecadienoyloxy)-tetratriacontenoyl)-sphing-4-enine + a diacylglycerol. The catalysed reaction is an N-(34-hydroxytetratriacontadienoyl)-sphing-4-enine + a (9Z,12Z)-octadecadienoyl-containing triacyl-sn-glycerol = an N-(34-(9Z,12Z-octadecadienoyloxy)-tetratriacontadienoyl)-sphing-4-enine + a diacylglycerol. It catalyses the reaction an N-(36-hydroxyhexatriacontenoyl)-sphing-4-enine + a (9Z,12Z)-octadecadienoyl-containing triacyl-sn-glycerol = an N-(36-(9Z,12Z-octadecadienoyloxy)-hexatriacontenoyl)-sphing-4-enine + a diacylglycerol. It carries out the reaction an N-(36-hydroxyhexatriacontadienoyl)-sphing-4-enine + a (9Z,12Z)-octadecadienoyl-containing triacyl-sn-glycerol = an N-(36-(9Z,12Z-octadecadienoyloxy)-hexatriacontadienoyl)-sphing-4-enine + a diacylglycerol. The enzyme catalyses an N-(38-hydroxyoctatriacontenoyl)-sphing-4-enine + a (9Z,12Z)-octadecadienoyl-containing triacyl-sn-glycerol = an N-(38-(9Z,12Z-octadecadienoyloxy)-octatriacontenoyl)-sphing-4-enine + a diacylglycerol. Its function is as follows. Omega-hydroxyceramide transacylase involved in the synthesis of omega-O-acylceramides (esterified omega-hydroxyacyl-sphingosine; EOS), which are extremely hydrophobic lipids involved in skin barrier formation. Catalyzes the last step of the synthesis of omega-O-acylceramides by transferring linoleic acid from triglycerides to an omega-hydroxyceramide. Omega-O-acylceramides, are required for the biogenesis of lipid lamellae in the stratum corneum and the formation of the cornified lipid envelope which are essential for the epidermis barrier function. These lipids also play a role in keratinocyte differentiation. May also act on omega-hydroxylated ultra-long chain fatty acids (omega-OH ULCFA) and acylglucosylceramides (GlcEOS). This is Omega-hydroxyceramide transacylase from Homo sapiens (Human).